A 171-amino-acid chain; its full sequence is Nicotinamide-nucleotide adenylyltransferase (171 aa).

It belongs to the archaeal NMN adenylyltransferase family.

The protein resides in the cytoplasm. It carries out the reaction beta-nicotinamide D-ribonucleotide + ATP + H(+) = diphosphate + NAD(+). The protein operates within cofactor biosynthesis; NAD(+) biosynthesis; NAD(+) from nicotinamide D-ribonucleotide: step 1/1. This chain is Nicotinamide-nucleotide adenylyltransferase, found in Methanococcus maripaludis (strain C5 / ATCC BAA-1333).